Here is a 183-residue protein sequence, read N- to C-terminus: Ribosome rescue factor SmrB (183 aa).

Residues 98 to 173 (LDLHGLTQLQ…GDAALLVLIE (76 aa)) form the Smr domain.

It belongs to the SmrB family. Associates with collided ribosomes, but not with correctly translating polysomes.

In terms of biological role, acts as a ribosome collision sensor. Detects stalled/collided disomes (pairs of ribosomes where the leading ribosome is stalled and a second ribosome has collided with it) and endonucleolytically cleaves mRNA at the 5' boundary of the stalled ribosome. Stalled/collided disomes form a new interface (primarily via the 30S subunits) that binds SmrB. Cleaved mRNA becomes available for tmRNA ligation, leading to ribosomal subunit dissociation and rescue of stalled ribosomes. This chain is Ribosome rescue factor SmrB, found in Escherichia coli O17:K52:H18 (strain UMN026 / ExPEC).